Reading from the N-terminus, the 560-residue chain is Formate--tetrahydrofolate ligase (560 aa).

69–76 contributes to the ATP binding site; the sequence is TPAGEGKS.

This sequence belongs to the formate--tetrahydrofolate ligase family.

The enzyme catalyses (6S)-5,6,7,8-tetrahydrofolate + formate + ATP = (6R)-10-formyltetrahydrofolate + ADP + phosphate. It functions in the pathway one-carbon metabolism; tetrahydrofolate interconversion. The chain is Formate--tetrahydrofolate ligase from Listeria monocytogenes serovar 1/2a (strain ATCC BAA-679 / EGD-e).